The primary structure comprises 1274 residues: Virulence protein SSD1 (1274 aa).

Residues 1 to 13 show a composition bias toward low complexity; that stretch reads MSSSQDYNNNSNN. Disordered regions lie at residues 1-38, 61-124, 138-337, and 413-488; these read MSSS…SELT, LEEK…GHSR, ANQK…TLFA, and KEKE…DDVE. The segment covering 19–32 has biased composition (basic residues); it reads SSRKGKNLHVAHRR. The span at 72 to 81 shows a compositional bias: polar residues; the sequence is FTYPSAQGSS. A compositionally biased stretch (low complexity) spans 95-106; the sequence is NRSSHSRSSSIN. The segment covering 139–152 has biased composition (polar residues); that stretch reads NQKQSNRNSLSPTI. Low complexity predominate over residues 177–187; the sequence is GDTSGQSSSSH. The segment covering 248–263 has biased composition (polar residues); it reads SGSNTNTDGINSNWRA. Low complexity predominate over residues 264–282; that stretch reads QQQSPQQQQRQGGLLEPPQ. Positions 320 to 330 are enriched in gly residues; the sequence is QQGGHQGGGNN. The span at 413 to 437 shows a compositional bias: basic and acidic residues; that stretch reads KEKEEKKRRKDNTLHSRPLTDDIHN. Residues 438–453 are compositionally biased toward polar residues; that stretch reads DATSAPNTAEGSVTGT. The CSD2 domain occupies 562-637; the sequence is VWFKPTDKKV…EIDSILRDNN (76 aa). Residues 688 to 1001 enclose the RNB domain; the sequence is FVDHALHVKR…VHRQLKAVLN (314 aa). The DIS3L2 C-terminal domain occupies 1050–1136; sequence GQLLCMGTVV…KNKYRTSALQ (87 aa). The disordered stretch occupies residues 1174-1217; the sequence is SLKSNELHEVEKDETKSMPSSPTQSEIPKNVRTNSSSRISSSGN. A compositionally biased stretch (basic and acidic residues) spans 1178–1189; sequence NELHEVEKDETK. Residues 1190–1207 are compositionally biased toward polar residues; that stretch reads SMPSSPTQSEIPKNVRTN.

This sequence belongs to the RNR ribonuclease family.

Functionally, plays a role in resistance to host antimicrobial peptides such as protamine, RP-1, or human beta-defensin-2; allowing colonization of human tissues. Required for resistance to membrane permeabilization and maintenance of mitochondrial membrane potential upon exposure to RP-1. The sequence is that of Virulence protein SSD1 (SSD1) from Candida albicans (strain SC5314 / ATCC MYA-2876) (Yeast).